Reading from the N-terminus, the 391-residue chain is Transforming growth factor beta-1 proprotein (391 aa).

The signal sequence occupies residues 1–18; it reads MDPSPLLALLLLLGAARA. The tract at residues 19 to 63 is straightjacket domain; that stretch reads LSTCQRLDLEAAKKKRIEAVRGQILSKLRLTAPPPASETPPRPLP. Residues 64–270 form an arm domain region; the sequence is DDVRALYNST…ALPAERANEL (207 aa). N-linked (GlcNAc...) asparagine glycosylation is found at asparagine 71, asparagine 126, and asparagine 171. Residues 221–249 form a bowtie tail region; that stretch reads EMGPGHADEMRISIEGFEQQRGDMQSIAK. The short motif at 241–243 is the Cell attachment site element; sequence RGD. 4 disulfide bridges follow: cysteine 284–cysteine 295, cysteine 294–cysteine 357, cysteine 323–cysteine 388, and cysteine 327–cysteine 390.

The protein belongs to the TGF-beta family. As to quaternary structure, latency-associated peptide: Homodimer; disulfide-linked. Latency-associated peptide: Interacts with Transforming growth factor beta-1 (TGF-beta-1) chain; interaction is non-covalent and maintains (TGF-beta-1) in a latent state; each Latency-associated peptide (LAP) monomer interacts with TGF-beta-1 in the other monomer. Transforming growth factor beta-1: Homodimer; disulfide-linked. Transforming growth factor beta-1: Interacts with TGF-beta receptors (TGFBR1 and TGFBR2), leading to signal transduction. In terms of processing, transforming growth factor beta-1 proprotein: The precursor proprotein is cleaved in the Golgi apparatus to form Transforming growth factor beta-1 (TGF-beta-1) and Latency-associated peptide (LAP) chains, which remain non-covalently linked, rendering TGF-beta-1 inactive.

It is found in the secreted. Its subcellular location is the extracellular space. The protein localises to the extracellular matrix. Its function is as follows. Transforming growth factor beta-1 proprotein: Precursor of the Latency-associated peptide (LAP) and Transforming growth factor beta-1 (TGF-beta-1) chains, which constitute the regulatory and active subunit of TGF-beta-1, respectively. In terms of biological role, required to maintain the Transforming growth factor beta-1 (TGF-beta-1) chain in a latent state during storage in extracellular matrix. Associates non-covalently with TGF-beta-1 and regulates its activation via interaction with 'milieu molecules', such as LTBP1, LRRC32/GARP and LRRC33/NRROS, that control activation of TGF-beta-1. Interaction with integrins (ITGAV:ITGB6 or ITGAV:ITGB8) results in distortion of the Latency-associated peptide chain and subsequent release of the active TGF-beta-1. Transforming growth factor beta-1: Multifunctional protein that regulates the growth and differentiation of various cell types and is involved in various processes, such as normal development, immune function, microglia function and responses to neurodegeneration. Activation into mature form follows different steps: following cleavage of the proprotein in the Golgi apparatus, Latency-associated peptide (LAP) and Transforming growth factor beta-1 (TGF-beta-1) chains remain non-covalently linked rendering TGF-beta-1 inactive during storage in extracellular matrix. At the same time, LAP chain interacts with 'milieu molecules', such as LTBP1, LRRC32/GARP and LRRC33/NRROS that control activation of TGF-beta-1 and maintain it in a latent state during storage in extracellular milieus. TGF-beta-1 is released from LAP by integrins (ITGAV:ITGB6 or ITGAV:ITGB8): integrin-binding to LAP stabilizes an alternative conformation of the LAP bowtie tail and results in distortion of the LAP chain and subsequent release of the active TGF-beta-1. Once activated following release of LAP, TGF-beta-1 acts by binding to TGF-beta receptors (TGFBR1 and TGFBR2), which transduce signal. While expressed by many cells types, TGF-beta-1 only has a very localized range of action within cell environment thanks to fine regulation of its activation by Latency-associated peptide chain (LAP) and 'milieu molecules'. Plays an important role in bone remodeling: acts as a potent stimulator of osteoblastic bone formation. Can promote either T-helper 17 cells (Th17) or regulatory T-cells (Treg) lineage differentiation in a concentration-dependent manner. Can induce epithelial-to-mesenchymal transition (EMT) and cell migration in various cell types. This Gallus gallus (Chicken) protein is Transforming growth factor beta-1 proprotein (TGFB1).